The primary structure comprises 99 residues: Large ribosomal subunit protein uL23cz/uL23cy (99 aa).

The tract at residues M1–R37 is disordered. A compositionally biased stretch (basic and acidic residues) spans K12–Q21. Residues Y22 to K32 are compositionally biased toward polar residues.

This sequence belongs to the universal ribosomal protein uL23 family. In terms of assembly, part of the 50S ribosomal subunit.

The protein localises to the plastid. The protein resides in the chloroplast. Functionally, binds to 23S rRNA. The polypeptide is Large ribosomal subunit protein uL23cz/uL23cy (rpl23-A) (Selaginella uncinata (Blue spike-moss)).